The sequence spans 747 residues: Polyribonucleotide nucleotidyltransferase (747 aa).

Mg(2+)-binding residues include Asp487 and Asp493. A KH domain is found at 554–613; it reads PSTTTIKIDKDKIRDVIGPGGKVIKEICETSDAKIDISDDGTVSVYASDRDKLKVALDKI. Residues 623-691 form the S1 motif domain; sequence GEIFNGTVMK…NKGKAKLTIK (69 aa). Positions 691 to 747 are disordered; that stretch reads KNADKDKSSNNPKQKNNVNNSKENSEPERRDSSKKRAWNEDNNSDTTEVITERKYFN. Residues 699 to 712 show a composition bias toward low complexity; it reads SNNPKQKNNVNNSK. A compositionally biased stretch (polar residues) spans 730–739; it reads EDNNSDTTEV.

Belongs to the polyribonucleotide nucleotidyltransferase family. It depends on Mg(2+) as a cofactor.

It is found in the cytoplasm. The enzyme catalyses RNA(n+1) + phosphate = RNA(n) + a ribonucleoside 5'-diphosphate. In terms of biological role, involved in mRNA degradation. Catalyzes the phosphorolysis of single-stranded polyribonucleotides processively in the 3'- to 5'-direction. The protein is Polyribonucleotide nucleotidyltransferase of Rickettsia akari (strain Hartford).